The following is a 360-amino-acid chain: Photosystem II protein D1 3 (360 aa).

Transmembrane regions (helical) follow at residues 29–46 (YVGWFGVLMIPTLLTATI), 118–133 (HFLLGIFSYMGREWEL), and 142–156 (WIAVAYSAPVAAATA). H118 lines the chlorophyll a pocket. A pheophytin a-binding site is contributed by Y126. The [CaMn4O5] cluster site is built by D170 and E189. The helical transmembrane segment at 197–218 (FHMLGVAGVFGGALFSAMHGSL) threads the bilayer. H198 contributes to the chlorophyll a binding site. Residues H215 and 264-265 (SF) each bind a quinone. Fe cation is bound at residue H215. H272 contacts Fe cation. Residues 274-288 (FLAAWPVIGIWFASL) form a helical membrane-spanning segment. Residues H332, E333, D342, and A344 each coordinate [CaMn4O5] cluster. Residues 345–360 (AGDQAPVALQAPAING) constitute a propeptide that is removed on maturation.

It belongs to the reaction center PufL/M/PsbA/D family. As to quaternary structure, PSII is composed of 1 copy each of membrane proteins PsbA, PsbB, PsbC, PsbD, PsbE, PsbF, PsbH, PsbI, PsbJ, PsbK, PsbL, PsbM, PsbT, PsbX, PsbY, PsbZ, Psb30/Ycf12, peripheral proteins PsbO, CyanoQ (PsbQ), PsbU, PsbV and a large number of cofactors. It forms dimeric complexes. The D1/D2 heterodimer binds P680, chlorophylls that are the primary electron donor of PSII, and subsequent electron acceptors. It shares a non-heme iron and each subunit binds pheophytin, quinone, additional chlorophylls, carotenoids and lipids. D1 provides most of the ligands for the Mn4-Ca-O5 cluster of the oxygen-evolving complex (OEC). There is also a Cl(-1) ion associated with D1 and D2, which is required for oxygen evolution. The PSII complex binds additional chlorophylls, carotenoids and specific lipids. serves as cofactor. Tyr-161 forms a radical intermediate that is referred to as redox-active TyrZ, YZ or Y-Z. In terms of processing, C-terminally processed by CtpA; processing is essential to allow assembly of the oxygen-evolving complex and thus photosynthetic growth.

Its subcellular location is the cellular thylakoid membrane. The enzyme catalyses 2 a plastoquinone + 4 hnu + 2 H2O = 2 a plastoquinol + O2. In terms of biological role, photosystem II (PSII) is a light-driven water:plastoquinone oxidoreductase that uses light energy to abstract electrons from H(2)O, generating O(2) and a proton gradient subsequently used for ATP formation. It consists of a core antenna complex that captures photons, and an electron transfer chain that converts photonic excitation into a charge separation. The D1/D2 (PsbA/PsbD) reaction center heterodimer binds P680, the primary electron donor of PSII as well as several subsequent electron acceptors. This Picosynechococcus sp. (strain ATCC 27264 / PCC 7002 / PR-6) (Agmenellum quadruplicatum) protein is Photosystem II protein D1 3.